Reading from the N-terminus, the 414-residue chain is COUP transcription factor 2 (414 aa).

The segment at 1 to 72 (MAMVVSTWRD…PGGPGSDKQQ (72 aa)) is disordered. Positions 27–37 (PPVPGPPPGAP) are enriched in pro residues. The segment covering 38–57 (HTPQTPGQGGPASTPAQTAA) has biased composition (low complexity). Residue Thr-51 is modified to Phosphothreonine. The span at 58–67 (GGQGGPGGPG) shows a compositional bias: gly residues. Residues 76–151 (HIECVVCGDK…VGMRREAVQR (76 aa)) constitute a DNA-binding region (nuclear receptor). 2 consecutive NR C4-type zinc fingers follow at residues 79–99 (CVVC…CEGC) and 115–139 (CRAN…LKKC). The interaction with ZFPM2 stretch occupies residues 117–414 (ANRNCPIDQH…SFNWPYMAIQ (298 aa)). Residues 177–403 (YLSGYISLLL…TLIRDMLLSG (227 aa)) enclose the NR LBD domain. An important for dimerization region spans residues 337–414 (LQEKSQCALE…SFNWPYMAIQ (78 aa)).

The protein belongs to the nuclear hormone receptor family. NR2 subfamily. Interacts with SQSTM1. Binds DNA as a dimer; homodimer or heterodimer with NR2F6. Interacts with NCOA1, NCOA2, NCOA3 and PPARGC1A. Interacts with ZFPM2. In terms of tissue distribution, ubiquitous. Expressed in the stromal cells of developing fetal ovaries.

It is found in the nucleus. Its function is as follows. Ligand-activated transcription factor. Activated by high concentrations of 9-cis-retinoic acid and all-trans-retinoic acid, but not by dexamethasone, cortisol or progesterone (in vitro). Regulation of the apolipoprotein A-I gene transcription. Binds to DNA site A. May be required to establish ovary identity during early gonad development. This chain is COUP transcription factor 2 (NR2F2), found in Homo sapiens (Human).